Reading from the N-terminus, the 393-residue chain is Putative N(4)-(beta-N-acetylglucosaminyl)-L-asparaginase CG1827 (393 aa).

The signal sequence occupies residues 1-23 (MRRHLRASLWILCLATMAFSILA). Residues Asn-49 and Asn-64 are each glycosylated (N-linked (GlcNAc...) asparagine). 2 disulfides stabilise this stretch: Cys-97/Cys-102 and Cys-196/Cys-212. Residue Thr-243 is the Nucleophile of the active site. Substrate-binding positions include 271–274 (RVGD) and 294–297 (TGDG). Residues Cys-354 and Cys-381 are joined by a disulfide bond.

The protein belongs to the Ntn-hydrolase family. As to quaternary structure, heterotetramer of two alpha and two beta chains arranged as a dimer of alpha/beta heterodimers. In terms of processing, cleaved into an alpha and beta chain by autocatalysis; this activates the enzyme. The N-terminal residue of the beta subunit is responsible for the nucleophile hydrolase activity.

It carries out the reaction N(4)-(beta-N-acetyl-D-glucosaminyl)-L-asparagine + H2O = N-acetyl-beta-D-glucosaminylamine + L-aspartate + H(+). Its function is as follows. Cleaves the GlcNAc-Asn bond which joins oligosaccharides to the peptide of asparagine-linked glycoproteins. This Drosophila melanogaster (Fruit fly) protein is Putative N(4)-(beta-N-acetylglucosaminyl)-L-asparaginase CG1827.